A 234-amino-acid polypeptide reads, in one-letter code: Rhodanese-like domain-containing protein 9, chloroplastic (234 aa).

A chloroplast-targeting transit peptide spans 1–47 (MAGIISPSPTALYFTSNVGGRRLKAVSWAGKSVSGNVIRRRSLRIAA). In terms of domain architecture, Rhodanese spans 62–185 (AEEGYSVVDV…VKPGTFESVG (124 aa)). The active-site Cysteine persulfide intermediate is C145. A helical membrane pass occupies residues 204–222 (ISAVLGTVLVCAYLFIQFF).

It localises to the plastid. It is found in the chloroplast. Its subcellular location is the membrane. This is Rhodanese-like domain-containing protein 9, chloroplastic (STR9) from Arabidopsis thaliana (Mouse-ear cress).